The primary structure comprises 845 residues: Protein SEY1 (845 aa).

Positions 1 to 29 (MELNVDSAKQLLAEHEQELQSAHDAHSIL) form a coiled coil. Residues 1-749 (MELNVDSAKQ…KRATVSSIAQ (749 aa)) are Cytoplasmic-facing. Positions 112 to 334 (GFGYDLCAVL…DPNFVFKTEY (223 aa)) constitute a GB1/RHD3-type G domain. 122–129 (GSQSTGKS) contacts GTP. A helical membrane pass occupies residues 750–770 (VPLWMYGVMLVLGWNELMAIL). Over 771–773 (SSP) the chain is Lumenal. The chain crosses the membrane as a helical span at residues 774–794 (VYFAFLLVLIASAYIVWRLNL). At 795-845 (SGPLISVLRAVANEVHRLADAQLRTHFSQPLREPRPPAESRPAEQIELEPN) the chain is on the cytoplasmic side. The segment at 823 to 845 (QPLREPRPPAESRPAEQIELEPN) is disordered. The segment covering 826–838 (REPRPPAESRPAE) has biased composition (basic and acidic residues).

This sequence belongs to the TRAFAC class dynamin-like GTPase superfamily. GB1/RHD3 GTPase family. RHD3 subfamily.

Its subcellular location is the endoplasmic reticulum membrane. Its function is as follows. Cooperates with the reticulon proteins and tubule-shaping DP1 family proteins to generate and maintain the structure of the tubular endoplasmic reticulum network. Has GTPase activity, which is required for its function in ER organization. This is Protein SEY1 from Mycosarcoma maydis (Corn smut fungus).